Reading from the N-terminus, the 167-residue chain is Phospholipase A2 (167 aa).

The first 18 residues, 1 to 18 (MQVVLGSLFLLLLSTSHG), serve as a signal peptide directing secretion. A propeptide spanning residues 19–33 (WQIRDRIGDNELEER) is cleaved from the precursor. The Ca(2+) site is built by Trp-41, Gly-43, and Gly-45. 5 cysteine pairs are disulfide-bonded: Cys-42–Cys-64, Cys-63–Cys-103, Cys-70–Cys-96, Cys-94–Cys-128, and Cys-138–Cys-146. An N-linked (GlcNAc...) asparagine glycan is attached at Asn-46. The active site involves His-67. Asp-68 provides a ligand contact to Ca(2+). The active site involves Asp-97.

The protein belongs to the phospholipase A2 family. Group III subfamily. Requires Ca(2+) as cofactor. N-glycosylated; contains mannose, N-acetylglucosamine and fucose alphal-6 and/or alphal-3 linked to the innermost N-acetylglucosamine. Expressed by the venom gland.

It localises to the secreted. The enzyme catalyses a 1,2-diacyl-sn-glycero-3-phosphocholine + H2O = a 1-acyl-sn-glycero-3-phosphocholine + a fatty acid + H(+). In vivo, intraplantar injection in mice cause spontaneous pain behaviors and paw swelling. PLA2 catalyzes the calcium-dependent hydrolysis of the 2-acyl groups in 3-sn-phosphoglycerides. The polypeptide is Phospholipase A2 (Apis mellifera (Honeybee)).